The following is a 463-amino-acid chain: Minor capsid protein L2 (463 aa).

The short motif at 1-12 is the Nuclear localization signal element; sequence MVSHTHKRRKRA. Cysteine 21 and cysteine 27 are oxidised to a cystine. The short motif at 444-452 is the Nuclear localization signal element; sequence HLGKRRKRF.

The protein belongs to the papillomaviridae L2 protein family. As to quaternary structure, interacts with major capsid protein L1. Interacts with E2; this interaction inhibits E2 transcriptional activity but not the DNA replication function E2. Interacts with host GADD45GIP1. Interacts with host HSPA8; this interaction is required for L2 nuclear translocation. Interacts with host importins KPNB2 and KPNB3. Forms a complex with importin alpha2-beta1 heterodimers via interaction with the importin alpha2 adapter. Interacts with host DYNLT1; this interaction is essential for virus intracellular transport during entry. Interacts (via C-terminus) with host retromer subunits VPS35 and VPS29. Post-translationally, highly phosphorylated.

The protein resides in the virion. Its subcellular location is the host nucleus. It is found in the host early endosome. The protein localises to the host Golgi apparatus. Its function is as follows. Minor protein of the capsid that localizes along the inner surface of the virion, within the central cavities beneath the L1 pentamers. Plays a role in capsid stabilization through interaction with the major capsid protein L1. Once the virion enters the host cell, L2 escorts the genomic DNA into the nucleus by promoting escape from the endosomal compartments and traffic through the host Golgi network. Mechanistically, the C-terminus of L2 possesses a cell-penetrating peptide that protudes from the host endosome, interacts with host cytoplasmic retromer cargo and thereby mediates the capsid delivery to the host trans-Golgi network. Plays a role through its interaction with host dynein in the intracellular microtubule-dependent transport of viral capsid toward the nucleus. Mediates the viral genome import into the nucleus through binding to host importins. Once within the nucleus, L2 localizes viral genomes to host PML bodies in order to activate early gene expression for establishment of infection. Later on, promotes late gene expression by interacting with the viral E2 protein and by inhibiting its transcriptional activation functions. During virion assembly, encapsidates the genome by direct interaction with the viral DNA. The protein is Minor capsid protein L2 of Homo sapiens (Human).